The chain runs to 74 residues: Cyclin-dependent kinases regulatory subunit (74 aa).

It belongs to the CKS family. In terms of assembly, forms a homohexamer that can probably bind six kinase subunits.

Functionally, binds to the catalytic subunit of the cyclin dependent kinases Cdk1 and Cdk2, and is essential for their biological function. In Drosophila melanogaster (Fruit fly), this protein is Cyclin-dependent kinases regulatory subunit (Cks30A).